The chain runs to 262 residues: Acyl-[acyl-carrier-protein]--UDP-N-acetylglucosamine O-acyltransferase (262 aa).

Belongs to the transferase hexapeptide repeat family. LpxA subfamily. In terms of assembly, homotrimer.

The protein resides in the cytoplasm. The catalysed reaction is a (3R)-hydroxyacyl-[ACP] + UDP-N-acetyl-alpha-D-glucosamine = a UDP-3-O-[(3R)-3-hydroxyacyl]-N-acetyl-alpha-D-glucosamine + holo-[ACP]. It functions in the pathway glycolipid biosynthesis; lipid IV(A) biosynthesis; lipid IV(A) from (3R)-3-hydroxytetradecanoyl-[acyl-carrier-protein] and UDP-N-acetyl-alpha-D-glucosamine: step 1/6. In terms of biological role, involved in the biosynthesis of lipid A, a phosphorylated glycolipid that anchors the lipopolysaccharide to the outer membrane of the cell. This Paracidovorax citrulli (strain AAC00-1) (Acidovorax citrulli) protein is Acyl-[acyl-carrier-protein]--UDP-N-acetylglucosamine O-acyltransferase.